A 229-amino-acid chain; its full sequence is Heptaprenylglyceryl phosphate synthase (229 aa).

Lys-12 is a sn-glycerol 1-phosphate binding site. The Mg(2+) site is built by Asp-14 and Ser-40. Residues 159-164, Gly-189, and 209-210 contribute to the sn-glycerol 1-phosphate site; these read YLEYSG and GN.

The protein belongs to the GGGP/HepGP synthase family. Group I subfamily. Homodimer. Mg(2+) serves as cofactor.

The enzyme catalyses sn-glycerol 1-phosphate + all-trans-heptaprenyl diphosphate = 3-heptaprenyl-sn-glycero-1-phosphate + diphosphate. Its pathway is membrane lipid metabolism; glycerophospholipid metabolism. Its function is as follows. Prenyltransferase that catalyzes in vivo the transfer of the heptaprenyl moiety of heptaprenyl pyrophosphate (HepPP; 35 carbon atoms) to the C3 hydroxyl of sn-glycerol-1-phosphate (G1P), producing heptaprenylglyceryl phosphate (HepGP). This reaction is an ether-bond-formation step in the biosynthesis of archaea-type G1P-based membrane lipids found in Bacillales. The protein is Heptaprenylglyceryl phosphate synthase of Bacillus thuringiensis (strain Al Hakam).